The sequence spans 334 residues: snRNA-activating protein complex subunit 2 (334 aa).

Disordered stretches follow at residues 137-200 (LHSK…STEE) and 271-306 (AGGS…ELKS). Low complexity predominate over residues 167–180 (IPSSAPAAPSSAPR).

As to quaternary structure, part of the SNAPc complex composed of 5 subunits: SNAPC1, SNAPC2, SNAPC3, SNAPC4 and SNAPC5. SNAPC2 interacts with TBP and SNAPC4.

The protein resides in the nucleus. Its function is as follows. Part of the SNAPc complex required for the transcription of both RNA polymerase II and III small-nuclear RNA genes. Binds to the proximal sequence element (PSE), a non-TATA-box basal promoter element common to these 2 types of genes. Recruits TBP and BRF2 to the U6 snRNA TATA box. This chain is snRNA-activating protein complex subunit 2 (SNAPC2), found in Homo sapiens (Human).